We begin with the raw amino-acid sequence, 107 residues long: UPF0145 protein PC1_1703 (107 aa).

This sequence belongs to the UPF0145 family.

The chain is UPF0145 protein PC1_1703 from Pectobacterium carotovorum subsp. carotovorum (strain PC1).